Here is a 197-residue protein sequence, read N- to C-terminus: Ribosomal RNA large subunit methyltransferase E (197 aa).

S-adenosyl-L-methionine is bound by residues Gly50, Trp52, Asp67, Asp83, and Asp111. Residue Lys151 is the Proton acceptor of the active site.

This sequence belongs to the class I-like SAM-binding methyltransferase superfamily. RNA methyltransferase RlmE family.

The protein localises to the cytoplasm. It catalyses the reaction uridine(2552) in 23S rRNA + S-adenosyl-L-methionine = 2'-O-methyluridine(2552) in 23S rRNA + S-adenosyl-L-homocysteine + H(+). In terms of biological role, specifically methylates the uridine in position 2552 of 23S rRNA at the 2'-O position of the ribose in the fully assembled 50S ribosomal subunit. The sequence is that of Ribosomal RNA large subunit methyltransferase E from Thermoplasma volcanium (strain ATCC 51530 / DSM 4299 / JCM 9571 / NBRC 15438 / GSS1).